Reading from the N-terminus, the 431-residue chain is Enolase (431 aa).

Q167 contributes to the (2R)-2-phosphoglycerate binding site. E209 serves as the catalytic Proton donor. Mg(2+)-binding residues include D246, E287, and D314. Residues K339, R368, S369, and K390 each contribute to the (2R)-2-phosphoglycerate site. K339 (proton acceptor) is an active-site residue.

It belongs to the enolase family. Requires Mg(2+) as cofactor.

The protein localises to the cytoplasm. It localises to the secreted. Its subcellular location is the cell surface. It catalyses the reaction (2R)-2-phosphoglycerate = phosphoenolpyruvate + H2O. It participates in carbohydrate degradation; glycolysis; pyruvate from D-glyceraldehyde 3-phosphate: step 4/5. Its function is as follows. Catalyzes the reversible conversion of 2-phosphoglycerate (2-PG) into phosphoenolpyruvate (PEP). It is essential for the degradation of carbohydrates via glycolysis. The sequence is that of Enolase from Prochlorococcus marinus (strain MIT 9303).